Consider the following 339-residue polypeptide: Lipoate-protein ligase A (339 aa).

One can recognise a BPL/LPL catalytic domain in the interval 29–217; that stretch reads PKKQSILFLW…AFFQHYGMKV (189 aa). Residues R71, 76–79, and K135 contribute to the ATP site; that span reads GAVF. Position 135 (K135) interacts with (R)-lipoate.

Belongs to the LplA family. As to quaternary structure, monomer.

The protein resides in the cytoplasm. The catalysed reaction is L-lysyl-[lipoyl-carrier protein] + (R)-lipoate + ATP = N(6)-[(R)-lipoyl]-L-lysyl-[lipoyl-carrier protein] + AMP + diphosphate + H(+). The protein operates within protein modification; protein lipoylation via exogenous pathway; protein N(6)-(lipoyl)lysine from lipoate: step 1/2. Its pathway is protein modification; protein lipoylation via exogenous pathway; protein N(6)-(lipoyl)lysine from lipoate: step 2/2. Functionally, catalyzes both the ATP-dependent activation of exogenously supplied lipoate to lipoyl-AMP and the transfer of the activated lipoyl onto the lipoyl domains of lipoate-dependent enzymes. In Blochmanniella pennsylvanica (strain BPEN), this protein is Lipoate-protein ligase A.